The sequence spans 234 residues: Large ribosomal subunit protein uL1 (234 aa).

This sequence belongs to the universal ribosomal protein uL1 family. As to quaternary structure, part of the 50S ribosomal subunit.

Its function is as follows. Binds directly to 23S rRNA. The L1 stalk is quite mobile in the ribosome, and is involved in E site tRNA release. Functionally, protein L1 is also a translational repressor protein, it controls the translation of the L11 operon by binding to its mRNA. This chain is Large ribosomal subunit protein uL1, found in Yersinia pseudotuberculosis serotype O:1b (strain IP 31758).